Consider the following 634-residue polypeptide: DNA-directed RNA polymerase subunit gamma (634 aa).

4 residues coordinate Zn(2+): Cys74, Cys76, Cys89, and Cys92. 3 residues coordinate Mg(2+): Asp471, Asp473, and Asp475.

The protein belongs to the RNA polymerase beta' chain family. RpoC1 subfamily. In terms of assembly, in cyanobacteria the RNAP catalytic core is composed of 2 alpha, 1 beta, 1 beta', 1 gamma and 1 omega subunit. When a sigma factor is associated with the core the holoenzyme is formed, which can initiate transcription. It depends on Mg(2+) as a cofactor. Zn(2+) is required as a cofactor.

The enzyme catalyses RNA(n) + a ribonucleoside 5'-triphosphate = RNA(n+1) + diphosphate. DNA-dependent RNA polymerase catalyzes the transcription of DNA into RNA using the four ribonucleoside triphosphates as substrates. The chain is DNA-directed RNA polymerase subunit gamma from Synechococcus sp. (strain CC9311).